An 809-amino-acid polypeptide reads, in one-letter code: Origin of replication complex subunit 1A (809 aa).

Positions 1 to 47 (MASSLSSKAKTFKSPTKTPTKMYRKSYLSPSSTSLTPPQTPETLTPL) are enriched in low complexity. Residues 1-69 (MASSLSSKAK…LGNDPIDLPG (69 aa)) form a disordered region. Positions 160-185 (DPEIEDCQICFKSHTNTIMIECDDCL) are histone H3 binding. The PHD-type zinc finger occupies 163–213 (IEDCQICFKSHTNTIMIECDDCLGGFHLNCLKPPLKEVPEGDWICQFCEVK). Positions 166, 169, 181, 184, 189, and 192 each coordinate Zn(2+). The histone H3 binding stretch occupies residues 201–205 (PEGDW). Positions 207 and 210 each coordinate Zn(2+). The BAH domain occupies 223-341 (PKPPEGKKLA…VHWGSFKRVA (119 aa)). The interval 316–321 (ASNDGD) is histone H3 binding. Residues 431–799 (PKSLPCRSKE…DDVAFALKDN (369 aa)) are necessary and sufficient for ORC complex assembly. ATP is bound by residues 466 to 473 (GVPGTGKT) and 466 to 474 (GVPGTGKTI). 2 residues coordinate Mg(2+): Asp-556 and Glu-557. ATP-binding residues include Glu-557, Asn-590, and Arg-655.

This sequence belongs to the ORC1 family. In terms of assembly, component of the origin recognition complex (ORC) composed of at least ORC1 (ORC1A or ORC1B), ORC2, ORC3, ORC4, ORC5 and ORC6. ORC is regulated in a cell-cycle and development dependent manner. It is sequentially assembled at the exit from anaphase of mitosis and disassembled as cells enter S phase. Interacts directly with ORC2, ORC3, ORC4 and ORC5. Binds mostly unmodified histone H3, and, with lower efficiency, H3K4me1 H3K4me2 and H3K4me3. As to expression, follow a cell-cycle regulation with a peak at the G1/S-phase. Mostly expressed in siliques, flowers and flower buds, and, to a lower extent, in roots, leaves and stems.

It localises to the nucleus. Its function is as follows. Essential protein. Component of the origin recognition complex (ORC) that binds origins of replication. It has a role in both chromosomal replication and mating type transcriptional silencing. Binds to the ARS consensus sequence (ACS) of origins of replication. H3K4me3 effector that positively regulates the transcription of a subset of genes. The protein is Origin of replication complex subunit 1A of Arabidopsis thaliana (Mouse-ear cress).